Reading from the N-terminus, the 465-residue chain is CCA-adding enzyme (465 aa).

2 residues coordinate ATP: S63 and K66. Residues S63 and K66 each coordinate CTP. E75, D77, and D127 together coordinate Mg(2+). 3 residues coordinate ATP: H149, K171, and Y180. Residues H149, K171, and Y180 each coordinate CTP.

This sequence belongs to the tRNA nucleotidyltransferase/poly(A) polymerase family. Archaeal CCA-adding enzyme subfamily. In terms of assembly, homodimer. Requires Mg(2+) as cofactor.

The enzyme catalyses a tRNA precursor + 2 CTP + ATP = a tRNA with a 3' CCA end + 3 diphosphate. The catalysed reaction is a tRNA with a 3' CCA end + 2 CTP + ATP = a tRNA with a 3' CCACCA end + 3 diphosphate. Catalyzes the addition and repair of the essential 3'-terminal CCA sequence in tRNAs without using a nucleic acid template. Adds these three nucleotides in the order of C, C, and A to the tRNA nucleotide-73, using CTP and ATP as substrates and producing inorganic pyrophosphate. tRNA 3'-terminal CCA addition is required both for tRNA processing and repair. Also involved in tRNA surveillance by mediating tandem CCA addition to generate a CCACCA at the 3' terminus of unstable tRNAs. While stable tRNAs receive only 3'-terminal CCA, unstable tRNAs are marked with CCACCA and rapidly degraded. This Aeropyrum pernix (strain ATCC 700893 / DSM 11879 / JCM 9820 / NBRC 100138 / K1) protein is CCA-adding enzyme.